A 219-amino-acid chain; its full sequence is Endo-type membrane-bound lytic murein transglycosylase A-like protein (219 aa).

Belongs to the transglycosylase Slt family.

It carries out the reaction Endolytic cleavage of the (1-&gt;4)-beta-glycosidic linkage between N-acetylmuramic acid (MurNAc) and N-acetylglucosamine (GlcNAc) residues in peptidoglycan with concomitant formation of a 1,6-anhydrobond in the MurNAc residue.. Murein-degrading enzyme. May play a role in recycling of muropeptides during cell elongation and/or cell division (Potential). This chain is Endo-type membrane-bound lytic murein transglycosylase A-like protein, found in Shigella flexneri.